We begin with the raw amino-acid sequence, 193 residues long: GTP cyclohydrolase 1 (193 aa).

Positions 73, 76, and 144 each coordinate Zn(2+).

This sequence belongs to the GTP cyclohydrolase I family. Homomer.

The enzyme catalyses GTP + H2O = 7,8-dihydroneopterin 3'-triphosphate + formate + H(+). Its pathway is cofactor biosynthesis; 7,8-dihydroneopterin triphosphate biosynthesis; 7,8-dihydroneopterin triphosphate from GTP: step 1/1. The chain is GTP cyclohydrolase 1 from Hyperthermus butylicus (strain DSM 5456 / JCM 9403 / PLM1-5).